The primary structure comprises 166 residues: Large ribosomal subunit protein uL10 (166 aa).

Belongs to the universal ribosomal protein uL10 family. In terms of assembly, part of the ribosomal stalk of the 50S ribosomal subunit. The N-terminus interacts with L11 and the large rRNA to form the base of the stalk. The C-terminus forms an elongated spine to which L12 dimers bind in a sequential fashion forming a multimeric L10(L12)X complex.

Forms part of the ribosomal stalk, playing a central role in the interaction of the ribosome with GTP-bound translation factors. This is Large ribosomal subunit protein uL10 from Lactobacillus johnsonii (strain CNCM I-12250 / La1 / NCC 533).